The sequence spans 90 residues: Elongation factor 1-beta (90 aa).

This sequence belongs to the EF-1-beta/EF-1-delta family.

Its function is as follows. Promotes the exchange of GDP for GTP in EF-1-alpha/GDP, thus allowing the regeneration of EF-1-alpha/GTP that could then be used to form the ternary complex EF-1-alpha/GTP/AAtRNA. This Staphylothermus marinus (strain ATCC 43588 / DSM 3639 / JCM 9404 / F1) protein is Elongation factor 1-beta.